The sequence spans 164 residues: MAWLVLRRLGPVLAPRCPRLSLRPQVPAVRRLGTGSLLLSARKFTDKHEWISVENGIGTVGISNFAQEALGDVVYCSLPEIGTKLNKDDEFGALESVKAASELYSPLTGEVTDINAALADNPGLVNKSCYQDGWLIKMTVEKPAELDELMSEDAYEKYIKSIED.

A mitochondrion-targeting transit peptide spans 1-39; that stretch reads MAWLVLRRLGPVLAPRCPRLSLRPQVPAVRRLGTGSLLL. In terms of domain architecture, Lipoyl-binding spans 57–139; sequence IGTVGISNFA…YQDGWLIKMT (83 aa). Lys-98 carries the post-translational modification N6-lipoyllysine.

This sequence belongs to the GcvH family. The glycine cleavage system is composed of four proteins: P (GLDC), T (GCST), L (DLD) and H (GCSH). Interacts with GLDC. It depends on (R)-lipoate as a cofactor.

It localises to the mitochondrion. The glycine cleavage system catalyzes the degradation of glycine. The H protein (GCSH) shuttles the methylamine group of glycine from the P protein (GLDC) to the T protein (GCST). Has a pivotal role in the lipoylation of enzymes involved in cellular energetics such as the mitochondrial dihydrolipoyllysine-residue acetyltransferase component of pyruvate dehydrogenase complex (DLAT), and the mitochondrial dihydrolipoyllysine-residue succinyltransferase component of 2-oxoglutarate dehydrogenase complex (DLST). This chain is Glycine cleavage system H protein, mitochondrial, found in Gallus gallus (Chicken).